An 86-amino-acid polypeptide reads, in one-letter code: MLAISSNLSKMIIFIFAIIIIVVLCVITYLYLYKDESLVSKHYINYMAIPENDGVFTWLPDFFPHVAVDISIYTNVEDDYFFLIFP.

A helical transmembrane segment spans residues Ile12–Leu32.

It is found in the membrane. This is an uncharacterized protein from Escherichia coli (strain K12).